Here is a 275-residue protein sequence, read N- to C-terminus: Large ribosomal subunit protein uL2 (275 aa).

The tract at residues 212–275 (NRHRGIRPQT…DKLIISRRKK (64 aa)) is disordered. Over residues 257-275 (YKTRRKKPSDKLIISRRKK) the composition is skewed to basic residues.

Belongs to the universal ribosomal protein uL2 family. Part of the 50S ribosomal subunit. Forms a bridge to the 30S subunit in the 70S ribosome.

In terms of biological role, one of the primary rRNA binding proteins. Required for association of the 30S and 50S subunits to form the 70S ribosome, for tRNA binding and peptide bond formation. It has been suggested to have peptidyltransferase activity; this is somewhat controversial. Makes several contacts with the 16S rRNA in the 70S ribosome. This is Large ribosomal subunit protein uL2 from Nitratiruptor sp. (strain SB155-2).